A 1101-amino-acid chain; its full sequence is Rho GTPase-activating protein 30 (1101 aa).

The Rho-GAP domain occupies Cys-20 to Phe-215. 2 disordered regions span residues Arg-305 to Leu-397 and Leu-450 to Ser-499. Residues Leu-309–Ser-319 show a composition bias toward basic and acidic residues. The segment covering Ser-348–Glu-367 has biased composition (low complexity). Pro residues predominate over residues Gln-451–Ser-465. At Ser-578 the chain carries Phosphoserine. The segment at Leu-622–Glu-848 is disordered. 4 stretches are compositionally biased toward basic and acidic residues: residues Thr-659–Ala-677, Glu-686–Asp-762, Glu-786–Asp-821, and Asp-829–Asp-844. Phosphoserine is present on Ser-875. Disordered regions lie at residues Glu-878–Ala-901 and Cys-968–Ala-987. Ser-996 is subject to Phosphoserine. Residues Ser-1044–Val-1076 form a disordered region. The span at Arg-1052 to Ser-1064 shows a compositional bias: basic and acidic residues.

Interacts with RHOU in a GTP-independent manner.

The protein resides in the cytoplasmic vesicle. Functionally, GTPase-activating protein (GAP) for RAC1 and RHOA, but not for CDC42. In Mus musculus (Mouse), this protein is Rho GTPase-activating protein 30 (Arhgap30).